Here is a 263-residue protein sequence, read N- to C-terminus: Zinc transporter ZupT (263 aa).

Helical transmembrane passes span 1–21 (MLFAFGLTLFAGLATGIGGLI), 37–57 (LGFSVGVMLYVSFVEILPGAF), 68–88 (GGSWAAVIGFFGGIALIAIID), 116–136 (MMKMGVLTALAIAIHNFPEGF), and 138–158 (TFLAGLSDPMIAIPVAVAIAI). The Fe(2+) site is built by Asn131 and Glu134. A Zn(2+)-binding site is contributed by Glu134. His159 is a binding site for Zn(2+). Fe(2+)-binding residues include Asn160, Glu163, and Glu192. Residue Glu163 participates in Zn(2+) binding. Helical transmembrane passes span 184–204 (WATLSGLAEPAGALIGFLLLM), 206–226 (FIGPEALGLCFAAVAGVMVFI), and 243–263 (TAIYGLIAGMAVMAISLLLFI).

The protein belongs to the ZIP transporter (TC 2.A.5) family. ZupT subfamily.

The protein localises to the cell membrane. The enzyme catalyses Zn(2+)(in) = Zn(2+)(out). In terms of biological role, mediates zinc uptake. May also transport other divalent cations. The protein is Zinc transporter ZupT of Corynebacterium glutamicum (strain ATCC 13032 / DSM 20300 / JCM 1318 / BCRC 11384 / CCUG 27702 / LMG 3730 / NBRC 12168 / NCIMB 10025 / NRRL B-2784 / 534).